The following is a 314-amino-acid chain: Mitochondrial 2-oxoglutarate/malate carrier protein (314 aa).

Residue A2 is modified to N-acetylalanine. S6 is modified (phosphoserine). 3 Solcar repeats span residues 23–108 (VKFL…LFER), 117–208 (PGFL…SKQF), and 217–306 (DNIL…MNKA). Residues 24–42 (KFLFGGLAGMGATVFVQPL) traverse the membrane as a helical segment. K57 is subject to N6-succinyllysine. A helical transmembrane segment spans residues 83 to 101 (GLSAGLLRQATYTTTRLGI). Position 102 is a phosphotyrosine (Y102). Transmembrane regions (helical) follow at residues 119–140 (FLLK…GTPA), 183–202 (GCIP…LASY), and 222–240 (HFCA…SMPV). K256 is modified (N6-acetyllysine). A helical transmembrane segment spans residues 281–300 (GFTPYYARLGPHTVLTFIFL).

Belongs to the mitochondrial carrier (TC 2.A.29) family. As to quaternary structure, interacts with SMIM26. The N-terminus is blocked. Heart, liver and brain.

It localises to the mitochondrion inner membrane. The catalysed reaction is (S)-malate(in) + 2-oxoglutarate(out) = (S)-malate(out) + 2-oxoglutarate(in). It catalyses the reaction malonate(in) + 2-oxoglutarate(out) = malonate(out) + 2-oxoglutarate(in). The enzyme catalyses succinate(in) + 2-oxoglutarate(out) = succinate(out) + 2-oxoglutarate(in). It carries out the reaction maleate(in) + 2-oxoglutarate(out) = maleate(out) + 2-oxoglutarate(in). The catalysed reaction is oxaloacetate(in) + 2-oxoglutarate(out) = oxaloacetate(out) + 2-oxoglutarate(in). Its function is as follows. Catalyzes the transport of 2-oxoglutarate (alpha-oxoglutarate) across the inner mitochondrial membrane in an electroneutral exchange for malate. Can also exchange 2-oxoglutarate for other dicarboxylic acids such as malonate, succinate, maleate and oxaloacetate, although with lower affinity. Contributes to several metabolic processes, including the malate-aspartate shuttle, the oxoglutarate/isocitrate shuttle, in gluconeogenesis from lactate, and in nitrogen metabolism. Maintains mitochondrial fusion and fission events, and the organization and morphology of cristae. Involved in the regulation of apoptosis. Helps protect from cytotoxic-induced apoptosis by modulating glutathione levels in mitochondria. The sequence is that of Mitochondrial 2-oxoglutarate/malate carrier protein (SLC25A11) from Bos taurus (Bovine).